An 809-amino-acid chain; its full sequence is Mediator of RNA polymerase II transcription subunit 15 (809 aa).

Disordered stretches follow at residues 115 to 137 (AMQGVAGGQQGAGAAGPMQQMIQ), 183 to 211 (QLQQHHQNQQMQHQNQQQQQAQNQQQQNQ), and 413 to 549 (GQMM…ASQS). Residues 119–128 (VAGGQQGAGA) show a composition bias toward gly residues. A compositionally biased stretch (low complexity) spans 446 to 467 (QQMPQAQQMMSSPSPVQVQTPQ). Residues 468–484 (SMPPPPQPQPSPQPPSS) show a composition bias toward pro residues. Low complexity-rich tracts occupy residues 485 to 502 (QPNSVSSGPTPSPGGFQP) and 510 to 520 (QSPASSRTPQS). Positions 533–549 (TPGNPSSVMSPAGASQS) are enriched in polar residues.

This sequence belongs to the Mediator complex subunit 15 family. In terms of assembly, component of the Mediator complex. Interacts with srebf1 and srebf2. Interacts with smad2, smad3 and smad4.

The protein localises to the cytoplasm. It is found in the nucleus. Component of the Mediator complex, a coactivator involved in the regulated transcription of nearly all RNA polymerase II-dependent genes. Mediator functions as a bridge to convey information from gene-specific regulatory proteins to the basal RNA polymerase II transcription machinery. Mediator is recruited to promoters by direct interactions with regulatory proteins and serves as a scaffold for the assembly of a functional preinitiation complex with RNA polymerase II and the general transcription factors. Required for cholesterol-dependent gene regulation. Positively regulates the Nodal signaling pathway. This is Mediator of RNA polymerase II transcription subunit 15 (med15) from Danio rerio (Zebrafish).